Consider the following 338-residue polypeptide: Malate dehydrogenase, mitochondrial (338 aa).

Residues 1 to 24 (MLSALARPASAALRRSFSTSAQNN) constitute a mitochondrion transit peptide. Residues 31–37 (GASGGIG) and aspartate 57 each bind NAD(+). Serine 33 carries O-linked (GlcNAc) serine glycosylation. An N6-acetyllysine; alternate mark is found at lysine 78 and lysine 91. An N6-succinyllysine; alternate mark is found at lysine 78 and lysine 91. Positions 104 and 110 each coordinate substrate. Residues asparagine 117 and 140 to 142 (IAN) contribute to the NAD(+) site. Asparagine 142 lines the substrate pocket. Lysine 165 is subject to N6-acetyllysine. Arginine 176 contributes to the substrate binding site. Residue lysine 185 is modified to N6-acetyllysine; alternate. The residue at position 185 (lysine 185) is an N6-succinyllysine; alternate. Residue histidine 200 is the Proton acceptor of the active site. Position 203 is an N6-succinyllysine (lysine 203). An N6-acetyllysine; alternate mark is found at lysine 215 and lysine 239. Lysine 215 and lysine 239 each carry N6-succinyllysine; alternate. Residue lysine 239 is modified to N6-malonyllysine; alternate. Serine 246 carries the phosphoserine modification. Methionine 251 is a binding site for NAD(+). Position 269 is an N6-succinyllysine (lysine 269). N6-acetyllysine; alternate is present on residues lysine 296, lysine 301, lysine 314, and lysine 324. N6-succinyllysine; alternate is present on residues lysine 296, lysine 301, lysine 314, and lysine 324. Phosphoserine is present on serine 326. 3 positions are modified to N6-acetyllysine; alternate: lysine 328, lysine 329, and lysine 335. Lysine 328 carries the N6-succinyllysine; alternate modification. Position 329 is an N6-malonyllysine; alternate (lysine 329). The residue at position 335 (lysine 335) is an N6-succinyllysine; alternate.

This sequence belongs to the LDH/MDH superfamily. MDH type 1 family. As to quaternary structure, homodimer. Acetylation is enhanced after treatment either with trichostin A (TCA) or with nicotinamide (NAM) with the appearance of tri- and tetraacetylations. Glucose also increases acetylation.

It localises to the mitochondrion matrix. It carries out the reaction (S)-malate + NAD(+) = oxaloacetate + NADH + H(+). Enzyme activity is enhanced by acetylation. The chain is Malate dehydrogenase, mitochondrial (MDH2) from Macaca fascicularis (Crab-eating macaque).